Here is a 180-residue protein sequence, read N- to C-terminus: ATP synthase subunit b, chloroplastic (180 aa).

A helical membrane pass occupies residues 28–48; that stretch reads VTTLINIGVVLCLLIIFGKGF.

Belongs to the ATPase B chain family. In terms of assembly, F-type ATPases have 2 components, F(1) - the catalytic core - and F(0) - the membrane proton channel. F(1) has five subunits: alpha(3), beta(3), gamma(1), delta(1), epsilon(1). F(0) has four main subunits: a(1), b(1), b'(1) and c(10-14). The alpha and beta chains form an alternating ring which encloses part of the gamma chain. F(1) is attached to F(0) by a central stalk formed by the gamma and epsilon chains, while a peripheral stalk is formed by the delta, b and b' chains.

The protein resides in the plastid. It is found in the chloroplast thylakoid membrane. F(1)F(0) ATP synthase produces ATP from ADP in the presence of a proton or sodium gradient. F-type ATPases consist of two structural domains, F(1) containing the extramembraneous catalytic core and F(0) containing the membrane proton channel, linked together by a central stalk and a peripheral stalk. During catalysis, ATP synthesis in the catalytic domain of F(1) is coupled via a rotary mechanism of the central stalk subunits to proton translocation. In terms of biological role, component of the F(0) channel, it forms part of the peripheral stalk, linking F(1) to F(0). This Cuscuta obtusiflora (Peruvian dodder) protein is ATP synthase subunit b, chloroplastic.